Consider the following 80-residue polypeptide: SPbeta prophage-derived thioredoxin-like protein YosR (80 aa).

A Thioredoxin domain is found at 1-80 (MRLIKLEQPN…ELDELLKELR (80 aa)). Cys-11 and Cys-14 are oxidised to a cystine.

Belongs to the thioredoxin family.

The chain is SPbeta prophage-derived thioredoxin-like protein YosR (yosR) from Bacillus subtilis (strain 168).